The following is a 500-amino-acid chain: Cysteine-rich secretory protein LCCL domain-containing 1 (500 aa).

Positions 1 to 23 are cleaved as a signal peptide; the sequence is MKCTAREWLRVTTVLFMARAIPA. The 141-residue stretch at 66 to 206 folds into the SCP domain; sequence LDLHNKLRSQ…PKAVYLVCNY (141 aa). A compositionally biased stretch (basic and acidic residues) spans 254–280; sequence EETNEIERQQSQVHDTHVRTRSDDSSR. A disordered region spans residues 254–281; that stretch reads EETNEIERQQSQVHDTHVRTRSDDSSRN. 2 consecutive LCCL domains span residues 289 to 384 and 390 to 492; these read MSQI…ANSF and TVQA…PGGK. Intrachain disulfides connect Cys-295–Cys-313, Cys-317–Cys-337, Cys-396–Cys-418, and Cys-422–Cys-445.

The protein belongs to the CRISP family.

The protein resides in the secreted. This is Cysteine-rich secretory protein LCCL domain-containing 1 (CRISPLD1) from Homo sapiens (Human).